A 432-amino-acid polypeptide reads, in one-letter code: Elongation factor 1-gamma (432 aa).

In terms of domain architecture, GST N-terminal spans 1 to 82 (LYTYPENWRA…YVSNEELRGS (82 aa)). The GST C-terminal domain occupies 83 to 211 (TPEAAAQVVQ…VKLCEKMAQF (129 aa)). 2 positions are modified to N6-acetyllysine: lysine 142 and lysine 207. Residues 216-249 (FAESQPKKDTPRKEKGSREEKQKPQAERKEEKKA) are compositionally biased toward basic and acidic residues. The disordered stretch occupies residues 216–258 (FAESQPKKDTPRKEKGSREEKQKPQAERKEEKKAAAPAPEEEL). Residue lysine 248 forms a Glycyl lysine isopeptide (Lys-Gly) (interchain with G-Cter in SUMO1) linkage. One can recognise an EF-1-gamma C-terminal domain in the interval 271–432 (AKDPFAHLPK…KAFNQGKIFK (162 aa)). Lysine 280 is covalently cross-linked (Glycyl lysine isopeptide (Lys-Gly) (interchain with G-Cter in SUMO2)). At lysine 396 the chain carries N6-acetyllysine. Residue lysine 429 is modified to N6-acetyllysine; alternate. Lysine 429 carries the N6-malonyllysine; alternate modification.

As to quaternary structure, EF-1 is composed of four subunits: alpha, beta, delta, and gamma.

Functionally, probably plays a role in anchoring the complex to other cellular components. In Sus scrofa (Pig), this protein is Elongation factor 1-gamma (EEF1G).